A 239-amino-acid polypeptide reads, in one-letter code: Ribonuclease PH (239 aa).

Residues Arg86 and 124-126 (GTR) each bind phosphate.

This sequence belongs to the RNase PH family. Homohexameric ring arranged as a trimer of dimers.

The enzyme catalyses tRNA(n+1) + phosphate = tRNA(n) + a ribonucleoside 5'-diphosphate. Its function is as follows. Phosphorolytic 3'-5' exoribonuclease that plays an important role in tRNA 3'-end maturation. Removes nucleotide residues following the 3'-CCA terminus of tRNAs; can also add nucleotides to the ends of RNA molecules by using nucleoside diphosphates as substrates, but this may not be physiologically important. Probably plays a role in initiation of 16S rRNA degradation (leading to ribosome degradation) during starvation. The chain is Ribonuclease PH from Rickettsia africae (strain ESF-5).